The sequence spans 232 residues: Ribosomal RNA small subunit methyltransferase G (232 aa).

S-adenosyl-L-methionine contacts are provided by residues G93, L98, 144–145 (VE), and R163.

Belongs to the methyltransferase superfamily. RNA methyltransferase RsmG family.

The protein resides in the cytoplasm. The enzyme catalyses guanosine(527) in 16S rRNA + S-adenosyl-L-methionine = N(7)-methylguanosine(527) in 16S rRNA + S-adenosyl-L-homocysteine. Functionally, specifically methylates the N7 position of guanine in position 527 of 16S rRNA. The chain is Ribosomal RNA small subunit methyltransferase G from Burkholderia pseudomallei (strain 1106a).